A 322-amino-acid polypeptide reads, in one-letter code: Fructose-1,6-bisphosphatase class 1 3 (322 aa).

Mg(2+) is bound by residues glutamate 84, aspartate 103, leucine 105, and aspartate 106. Substrate contacts are provided by residues 106-109 (DGSS), asparagine 198, and lysine 262. Glutamate 268 contacts Mg(2+).

Belongs to the FBPase class 1 family. In terms of assembly, homotetramer. Mg(2+) serves as cofactor.

The protein resides in the cytoplasm. It catalyses the reaction beta-D-fructose 1,6-bisphosphate + H2O = beta-D-fructose 6-phosphate + phosphate. It functions in the pathway carbohydrate biosynthesis; gluconeogenesis. The polypeptide is Fructose-1,6-bisphosphatase class 1 3 (Pseudoalteromonas translucida (strain TAC 125)).